Here is a 919-residue protein sequence, read N- to C-terminus: Bifunctional uridylyltransferase/uridylyl-removing enzyme (919 aa).

A uridylyltransferase region spans residues 1–373 (MTDPKVPRQR…LAGFNAKSRM (373 aa)). Residues 374–727 (LKGYTVFGGK…CEFDEERGAT (354 aa)) are uridylyl-removing. In terms of domain architecture, HD spans 489–611 (VDEHTIRAIG…VQSLERLRHL (123 aa)). ACT domains are found at residues 728 to 811 (LVTV…LAKR) and 839 to 919 (VIEV…LEPA).

It belongs to the GlnD family. The cofactor is Mg(2+).

The enzyme catalyses [protein-PII]-L-tyrosine + UTP = [protein-PII]-uridylyl-L-tyrosine + diphosphate. It carries out the reaction [protein-PII]-uridylyl-L-tyrosine + H2O = [protein-PII]-L-tyrosine + UMP + H(+). Uridylyltransferase (UTase) activity is inhibited by glutamine, while glutamine activates uridylyl-removing (UR) activity. Functionally, modifies, by uridylylation and deuridylylation, the PII regulatory proteins (GlnB and homologs), in response to the nitrogen status of the cell that GlnD senses through the glutamine level. Under low glutamine levels, catalyzes the conversion of the PII proteins and UTP to PII-UMP and PPi, while under higher glutamine levels, GlnD hydrolyzes PII-UMP to PII and UMP (deuridylylation). Thus, controls uridylylation state and activity of the PII proteins, and plays an important role in the regulation of nitrogen assimilation and metabolism. This chain is Bifunctional uridylyltransferase/uridylyl-removing enzyme, found in Erythrobacter litoralis (strain HTCC2594).